The following is a 135-amino-acid chain: Inner membrane protein YgfX (135 aa).

Residues 1–11 (MVLWQSDLRVS) are Cytoplasmic-facing. Residues 1–96 (MVLWQSDLRV…APWMIKSGMM (96 aa)) are not required to inhibit FtsZ or MreB polymerization. The helical transmembrane segment at 12 to 32 (WRAQWLSLLIHGLVAAVILLM) threads the bilayer. Topologically, residues 33–37 (PWPLS) are periplasmic. The helical transmembrane segment at 38–54 (YTPLWMVLLSLVVFDCV) threads the bilayer. The Cytoplasmic portion of the chain corresponds to 55 to 135 (RSQRRINARQ…RILLQQETQR (81 aa)).

In terms of assembly, interacts with MreB and FtsZ; interaction with the latter requires FtsZ residues 33-49.

The protein localises to the cell inner membrane. Functionally, a probable inner membrane protein. Has been shown not to be a toxin, no effects on growth are seen in LB or minimal medium up to 6 or 21 hours (respectively) after induction of expression. Interacts with cytoskeletal proteins FtsZ and MreB; inhibits FtsZ GTP-dependent polymerization as well as MreB ATP-dependent polymerization. Restores production of prodigiosin antibiotic (Pig) in Serratia strains with deletions of sdhE-ygfX; overexpression of this protein and CptB also restores Pig production to a slightly lesser extent in Serratia. The chain is Inner membrane protein YgfX from Escherichia coli (strain K12).